Consider the following 813-residue polypeptide: Leucine--tRNA ligase (813 aa).

Positions 42 to 52 (PYTSGNLHIGH) match the 'HIGH' region motif. The 'KMSKS' region motif lies at 580 to 584 (KMSKS). Lys-583 is a binding site for ATP.

It belongs to the class-I aminoacyl-tRNA synthetase family.

The protein resides in the cytoplasm. The enzyme catalyses tRNA(Leu) + L-leucine + ATP = L-leucyl-tRNA(Leu) + AMP + diphosphate. The polypeptide is Leucine--tRNA ligase (Dehalococcoides mccartyi (strain CBDB1)).